We begin with the raw amino-acid sequence, 595 residues long: Phytoene desaturase (595 aa).

The N-terminal stretch at 1 to 23 (MAETQRPRSAIIVGAGAGGIAVA) is a signal peptide. The chain crosses the membrane as a helical span at residues 574–594 (SQRAFPLLVALMGVLYFLLFV).

The protein belongs to the carotenoid/retinoid oxidoreductase family. NAD(+) serves as cofactor.

The protein resides in the membrane. It carries out the reaction 15-cis-phytoene + A = all-trans-phytofluene + AH2. The enzyme catalyses all-trans-phytofluene + A = all-trans-zeta-carotene + AH2. The catalysed reaction is all-trans-zeta-carotene + A = all-trans-neurosporene + AH2. It catalyses the reaction all-trans-neurosporene + A = all-trans-lycopene + AH2. It carries out the reaction all-trans-lycopene + A = all-trans-3,4-didehydrolycopene + AH2. The protein operates within carotenoid biosynthesis; lycopene biosynthesis. Phytoene desaturase involved in the carotenoid biosynthesis pathway. Converts phytoene into 3,4-didehydrolycopene via the intermediates phytofluene, zeta-carotene, neurosporene and lycopene, by introducing up to five double bonds into phytoene. Is also able to desaturate 1-hydroxyneurosporene into 1-hydroxylycopene and 1-hydroxylycopene into 1-hydroxy-3,4-didehydrolycopene. Gamma-carotene and 1,19-dihydroxylycopene are not accepted as substrates. Neurosporaxanthin is synthesized from geranyl-geranyl pyrophosphate (GGPP) through several enzymatic activities. Phytoene synthase activity performed by the bifunctional enzyme al-2 first produces phytoene from geranyl-geranyl pyrophosphate (GGPP). The phytoene dehydrogenase al-1 then introduces 5 desaturations to lead to 3,4-didehydrolycopene via the intermediates phytofluene, zeta-carotene, neurosporene and lycopene. Al-2 cyclase activity then converts 3,4-didehydrolycopene into torulene. Al-2 can also convet lycopene into gamma-carotene which in turn is converted to beta-carotene by an additional al-2 cyclization reaction. Torulene is the substrate of the dioxidase cao-2 that breaks the molecule, removing five carbon atoms to yield beta-apo-4'-carotenal, whereas the aldehyde dehydrogenase ylo-1 mediates the last step by converting beta-apo-4'-carotenal into neurosporaxanthin. The sequence is that of Phytoene desaturase from Neurospora crassa (strain ATCC 24698 / 74-OR23-1A / CBS 708.71 / DSM 1257 / FGSC 987).